The following is a 318-amino-acid chain: Ornithine carbamoyltransferase (318 aa).

Residues 63-66 (STRT), Q90, R114, and 141-144 (HPCQ) each bind carbamoyl phosphate. Residues N172, D235, and 239 to 240 (SM) contribute to the L-ornithine site. Residues 275-276 (CL) and R303 contribute to the carbamoyl phosphate site.

The protein belongs to the aspartate/ornithine carbamoyltransferase superfamily. OTCase family.

Its subcellular location is the cytoplasm. It catalyses the reaction carbamoyl phosphate + L-ornithine = L-citrulline + phosphate + H(+). It functions in the pathway amino-acid biosynthesis; L-arginine biosynthesis; L-arginine from L-ornithine and carbamoyl phosphate: step 1/3. In terms of biological role, reversibly catalyzes the transfer of the carbamoyl group from carbamoyl phosphate (CP) to the N(epsilon) atom of ornithine (ORN) to produce L-citrulline. The polypeptide is Ornithine carbamoyltransferase (Prochlorococcus marinus (strain MIT 9313)).